Consider the following 205-residue polypeptide: Allergen Asp f 15 homolog (205 aa).

It belongs to the cerato-platanin family.

It localises to the secreted. This chain is Allergen Asp f 15 homolog, found in Arthroderma benhamiae (strain ATCC MYA-4681 / CBS 112371) (Trichophyton mentagrophytes).